We begin with the raw amino-acid sequence, 624 residues long: Adhesion and hyphal regulator 1 (624 aa).

Residues 19 to 46 constitute a DNA-binding region (zn(2)-C6 fungal-type); sequence CVTCRDRHIKCDEQQPVCKNCQKSNRKC. Disordered regions lie at residues 63–84 and 230–250; these read DDNKPKELQQNEQPNSSHYAFP and PQHHPMLDTSQHQETTSTDPN. A compositionally biased stretch (polar residues) spans 237–250; it reads DTSQHQETTSTDPN.

In terms of assembly, interacts with MCM1.

The protein localises to the nucleus. Its function is as follows. Transcription factor that binds the promoters of genes involved in biofilm formation, which include several key adhesion genes, and recruits MCM1 to these sites. Plays an important role in hyphal growth and virulence. Promotes conversion of opaque cells to white phase, but needs existence of EFG1, a key regulator required for maintenance of the white state. The protein is Adhesion and hyphal regulator 1 (AHR1) of Candida albicans (strain SC5314 / ATCC MYA-2876) (Yeast).